A 365-amino-acid chain; its full sequence is 1-acyl-sn-glycerol-3-phosphate acyltransferase epsilon (365 aa).

The helical transmembrane segment at 15-35 (LLPSVLLLGSAPTYLLAWTLW) threads the bilayer. The HXXXXD motif signature appears at 93–98 (HQSTVD). The helical transmembrane segment at 345 to 365 (LYMGTWLYGTLLGCLWFVIKA) threads the bilayer.

This sequence belongs to the 1-acyl-sn-glycerol-3-phosphate acyltransferase family. Widely expressed.

It localises to the endoplasmic reticulum membrane. The protein resides in the nucleus envelope. The protein localises to the mitochondrion. It catalyses the reaction a 1-acyl-sn-glycero-3-phosphate + an acyl-CoA = a 1,2-diacyl-sn-glycero-3-phosphate + CoA. The catalysed reaction is 1-(9Z-octadecenoyl)-sn-glycero-3-phosphate + tetradecanoyl-CoA = 1-(9Z)-octadecenoyl-2-tetradecanoyl-sn-glycero-3-phosphate + CoA. The enzyme catalyses pentadecanoyl-CoA + 1-(9Z-octadecenoyl)-sn-glycero-3-phosphate = 1-(9Z)-octadecenoyl-2-pentadecanoyl-sn-glycero-3-phosphate + CoA. It carries out the reaction 1-(9Z-octadecenoyl)-sn-glycero-3-phosphate + octadecanoyl-CoA = 1-(9Z-octadecenoyl)-2-octadecanoyl-sn-glycero-3-phosphate + CoA. It catalyses the reaction nonadecanoyl-CoA + 1-(9Z-octadecenoyl)-sn-glycero-3-phosphate = 1-(9Z)-octadecenoyl-2-nonadecanoyl-sn-glycero-3-phosphate + CoA. The catalysed reaction is 1-(9Z-octadecenoyl)-sn-glycero-3-phosphoethanolamine + (9Z)-octadecenoyl-CoA = 1,2-di-(9Z-octadecenoyl)-sn-glycero-3-phosphoethanolamine + CoA. The enzyme catalyses 1-(9Z-octadecenoyl)-sn-glycero-3-phosphocholine + (9Z)-octadecenoyl-CoA = 1,2-di-(9Z-octadecenoyl)-sn-glycero-3-phosphocholine + CoA. It carries out the reaction 1-(9Z-octadecenoyl)-sn-glycero-3-phospho-(1D-myo-inositol) + (5Z,8Z,11Z,14Z)-eicosatetraenoyl-CoA = 1-(9Z-octadecenoyl)-2-(5Z,8Z,11Z,14Z-eicosatetraenoyl)-sn-glycero-3-phospho-1D-myo-inositol + CoA. It catalyses the reaction 1-(9Z-octadecenoyl)-sn-glycero-3-phospho-L-serine + (9Z)-octadecenoyl-CoA = 1,2-di-(9Z)-octadecenoyl-sn-glycero-3-phospho-L-serine + CoA. The catalysed reaction is 1-(9Z-octadecenoyl)-sn-glycero-3-phospho-L-serine + (5Z,8Z,11Z,14Z)-eicosatetraenoyl-CoA = 1-(9Z-octadecenoyl)-2-(5Z,8Z,11Z,14Z-eicosatetraenoyl)-sn-glycero-3-phospho-L-serine + CoA. The enzyme catalyses 1-hexadecanoyl-sn-glycero-3-phosphate + (9Z)-octadecenoyl-CoA = 1-hexadecanoyl-2-(9Z-octadecenoyl)-sn-glycero-3-phosphate + CoA. It carries out the reaction 1-heptadecanoyl-sn-glycero-3-phosphate + (9Z)-octadecenoyl-CoA = 1-heptadecanoyl-2-(9Z)-octadecenoyl-sn-glycero-3-phosphate + CoA. It catalyses the reaction 1-(5Z,8Z,11Z,14Z-eicosatetraenoyl)-sn-glycero-3-phosphate + (9Z)-octadecenoyl-CoA = 1-(5Z,8Z,11Z,14Z)-eicosatetraenoyl-2-(9Z)-octadecenoyl-sn-glycero-3-phosphate + CoA. The catalysed reaction is 1-octadecanoyl-sn-glycero-3-phosphate + (9Z)-octadecenoyl-CoA = 1-octadecanoyl-2-(9Z-octadecenoyl)-sn-glycero-3-phosphate + CoA. The enzyme catalyses 1-(9Z-octadecenoyl)-sn-glycero-3-phosphate + (5Z,8Z,11Z,14Z)-eicosatetraenoyl-CoA = 1-(9Z)-octadecenoyl-2-(5Z,8Z,11Z,14Z)-eicosatetraenoyl-sn-glycero-3-phosphate + CoA. It carries out the reaction heptadecanoyl-CoA + 1-(9Z-octadecenoyl)-sn-glycero-3-phosphate = 1-(9Z)-octadecenoyl-2-heptadecanoyl-sn-glycero-3-phosphate + CoA. It catalyses the reaction 1-(9Z-octadecenoyl)-sn-glycero-3-phosphocholine + (5Z,8Z,11Z,14Z)-eicosatetraenoyl-CoA = 1-(9Z)-octadecenoyl-2-(5Z,8Z,11Z,14Z)-icosatetraenoyl-sn-glycero-3-phosphocholine + CoA. The catalysed reaction is 1-(9Z-octadecenoyl)-sn-glycero-3-phosphate + (9Z)-octadecenoyl-CoA = 1,2-di-(9Z-octadecenoyl)-sn-glycero-3-phosphate + CoA. The enzyme catalyses 1-(9Z-octadecenoyl)-sn-glycero-3-phosphate + hexadecanoyl-CoA = 1-hexadecanoyl-2-(9Z-octadecenoyl)-sn-glycero-3-phosphate + CoA. The protein operates within phospholipid metabolism; CDP-diacylglycerol biosynthesis; CDP-diacylglycerol from sn-glycerol 3-phosphate: step 2/3. Converts 1-acyl-sn-glycerol-3-phosphate (lysophosphatidic acid or LPA) into 1,2-diacyl-sn-glycerol-3-phosphate (phosphatidic acid or PA) by incorporating an acyl moiety at the sn-2 position of the glycerol backbone. Acts on LPA containing saturated or unsaturated fatty acids C15:0-C20:4 at the sn-1 position using C18:1-CoA as the acyl donor. Also acts on lysophosphatidylethanolamine using oleoyl-CoA, but not arachidonoyl-CoA, and lysophosphatidylinositol using arachidonoyl-CoA, but not oleoyl-CoA. Activity toward lysophosphatidylglycerol not detectable. The polypeptide is 1-acyl-sn-glycerol-3-phosphate acyltransferase epsilon (Agpat5) (Mus musculus (Mouse)).